A 221-amino-acid polypeptide reads, in one-letter code: Factor arrest protein 7 (221 aa).

In terms of assembly, component of a complex at least composed of FAR3, FAR7, FAR8, FAR10, FAR11 and VPS64.

Functionally, participates in the control of the reentry into the cell cycle following pheromone treatment. The sequence is that of Factor arrest protein 7 (FAR7) from Saccharomyces cerevisiae (strain ATCC 204508 / S288c) (Baker's yeast).